Reading from the N-terminus, the 360-residue chain is 3-isopropylmalate dehydrogenase (360 aa).

Glycine 76 to glutamate 89 is an NAD(+) binding site. Residues arginine 96, arginine 106, arginine 134, and aspartate 224 each contribute to the substrate site. Residues aspartate 224, aspartate 248, and aspartate 252 each coordinate Mg(2+). Glycine 282 to asparagine 294 is a binding site for NAD(+).

This sequence belongs to the isocitrate and isopropylmalate dehydrogenases family. LeuB type 1 subfamily. In terms of assembly, homodimer. Mg(2+) is required as a cofactor. Requires Mn(2+) as cofactor.

The protein resides in the cytoplasm. The enzyme catalyses (2R,3S)-3-isopropylmalate + NAD(+) = 4-methyl-2-oxopentanoate + CO2 + NADH. It functions in the pathway amino-acid biosynthesis; L-leucine biosynthesis; L-leucine from 3-methyl-2-oxobutanoate: step 3/4. In terms of biological role, catalyzes the oxidation of 3-carboxy-2-hydroxy-4-methylpentanoate (3-isopropylmalate) to 3-carboxy-4-methyl-2-oxopentanoate. The product decarboxylates to 4-methyl-2 oxopentanoate. This is 3-isopropylmalate dehydrogenase from Pseudomonas fluorescens (strain ATCC BAA-477 / NRRL B-23932 / Pf-5).